The primary structure comprises 619 residues: Sodium-dependent dopamine transporter (619 aa).

Residues 1 to 56 are Cytoplasmic-facing; that stretch reads MSKSKCSVGPMSSVVAPAKEPNAVGPREVELILVKEQNGVQLTNSTLINPPQTPVE. The chain crosses the membrane as a discontinuously helical span at residues 57–95; sequence VQERETWSKKIDFLLSVIGFAVDLANVWRFPYLCYKNGG. Residues Gly75, Ala77, Val78, Asp79, and Asn82 each contribute to the Na(+) site. Residue Asp79 participates in dopamine binding. The next 2 membrane-spanning stretches (helical) occupy residues 96-127 and 128-171; these read GAFL…NREG and AAGV…FSSF. Dopamine-binding residues include Ser149 and Gly153. At 172–235 the chain is on the extracellular side; the sequence is TMDLPWIHCN…SRGIDDLGPP (64 aa). Cysteines 180 and 189 form a disulfide. N-linked (GlcNAc...) asparagine glycosylation is found at Asn181, Asn188, Asn196, and Asn204. 2 consecutive transmembrane segments (helical) span residues 236–255 and 256–286; these read RWQL…FSLW and KGVK…GVTL. Residues 287 to 305 are Extracellular-facing; it reads PGAMDGIRAYLSVDFYRLC. The chain crosses the membrane as a discontinuously helical span at residues 306–334; the sequence is EASVWIDAATQVCFSLGVGFGVLIAFSSY. Gln316 is a binding site for chloride. Phe319 provides a ligand contact to dopamine. Residues Ser320 and Asn352 each coordinate Na(+). A chloride-binding site is contributed by Ser320. A helical membrane pass occupies residues 335–375; it reads NKFTNNCYRDAIITTSINSLTSFSSGFVVFSFLGYMAQKHN. Ser356 is a chloride binding site. Residues 376–399 are Extracellular-facing; sequence VPIRDVATDGPGLIFIIYPEAIAT. The next 3 helical transmembrane spans lie at 400–441, 442–465, and 466–498; these read LPLS…QLLH, RHRE…CVTN, and GGIY…AWFY. Positions 417, 420, and 421 each coordinate Na(+). Ser421 and Ala422 together coordinate dopamine. Topologically, residues 499-515 are cytoplasmic; sequence GVQQFSDDIKQMTGQRP. Residues 516 to 541 form a helical membrane-spanning segment; it reads NLYWRLCWKLVSPCFLLYVVVVSIVT. The Extracellular portion of the chain corresponds to 542–552; it reads FRPPHYGAYIF. Residues 553-582 traverse the membrane as a helical segment; the sequence is PDWANALGWIIATSSMAMVPIYATYKFCSL. Residues 560–589 are interaction with TGFB1I1; the sequence is GWIIATSSMAMVPIYATYKFCSLPGSFREK. The Cytoplasmic segment spans residues 583-619; that stretch reads PGSFREKLAYAITPEKDRQLVDRGEVRQFTLRHWLLV.

Belongs to the sodium:neurotransmitter symporter (SNF) (TC 2.A.22) family. SLC6A3 subfamily. In terms of assembly, monomer. Homooligomer; disulfide-linked. Interacts with PRKCABP and TGFB1I1. Interacts (via N-terminus) with SYNGR3 (via N-terminus). Interacts with SLC18A2. Interacts with TOR1A (ATP-bound); TOR1A regulates SLC6A3 subcellular location. Interacts with alpha-synuclein/SNCA. Interacts with SEPTIN4. Found in the substantia nigra and ventral tegmental dopamine neurons, in fibers of the medial forebrain bundle ascending into the striatum, and within dense fiber networks and varicosities in the dorsal and ventral striatum (at protein level). Lower expression in the cortex (at protein level). Absent from the corpus callosum. Expressed throughout the retina at postnatal day 8.

Its subcellular location is the cell membrane. The protein resides in the cell projection. It is found in the neuron projection. The protein localises to the axon. It carries out the reaction dopamine(out) + chloride(out) + Na(+)(out) = dopamine(in) + chloride(in) + Na(+)(in). The catalysed reaction is (R)-noradrenaline(out) + chloride(out) + Na(+)(out) = (R)-noradrenaline(in) + chloride(in) + Na(+)(in). It catalyses the reaction dopamine(out) + chloride(out) + 2 Na(+)(out) = dopamine(in) + chloride(in) + 2 Na(+)(in). Inhibited by amphetamine, bupropion, cocaine and ritalin. Inhibited by zinc ions. In terms of biological role, mediates sodium- and chloride-dependent transport of dopamine. Also mediates sodium- and chloride-dependent transport of norepinephrine (also known as noradrenaline). Regulator of light-dependent retinal hyaloid vessel regression, downstream of OPN5 signaling. This is Sodium-dependent dopamine transporter (Slc6a3) from Mus musculus (Mouse).